The following is a 451-amino-acid chain: Serine/threonine-protein kinase VRK3 (451 aa).

Disordered regions lie at residues 28-61 (KHEG…SKKV) and 74-125 (LPSE…MTAS). Positions 32-45 (SQSFVKPFTSSSQG) are enriched in polar residues. The Nuclear localization signal motif lies at 47–62 (RRKTNTSSETSSKKVK). A phosphoserine mark is found at S53, S57, S80, S81, S88, and S106. The segment covering 78-91 (GKSSGSEDTLSTSG) has biased composition (polar residues). A compositionally biased stretch (low complexity) spans 98 to 116 (SRSPTPRSSPQTTRQSPQT). One can recognise a Protein kinase domain in the interval 123 to 434 (TASLEALPVG…TLRNELEALL (312 aa)).

This sequence belongs to the protein kinase superfamily. CK1 Ser/Thr protein kinase family. VRK subfamily. In terms of assembly, interacts with DUSP3. Interacts with RAN. Interacts with HSP70/HSPA1A. Phosphorylated at Ser-106 by CDK5; leading to protection of the cell against H2O2-induced apoptosis. In terms of processing, ubiquitinated by RNF144A.

The protein localises to the nucleus. It localises to the cytoplasm. It catalyses the reaction L-seryl-[protein] + ATP = O-phospho-L-seryl-[protein] + ADP + H(+). In terms of biological role, plays a role in the regulation of the cell cycle by phosphorylating the nuclear envelope protein barrier-to-autointegration factor/BAF that is required for disassembly and reassembly, respectively, of the nuclear envelope during mitosis. Under normal physiological conditions, negatively regulates ERK activity along with VHR phosphatase in the nucleus, causing timely and transient action of ERK. Stress conditions activate CDK5 which phosphorylates VRK3 to increase VHR phosphatase activity and suppress prolonged ERK activation that causes cell death. For example, upon glutamate induction, promotes nuclear localization of HSP70/HSPA1A to inhibit ERK activation via VHR phosphatase. The sequence is that of Serine/threonine-protein kinase VRK3 (VRK3) from Bos taurus (Bovine).